The primary structure comprises 213 residues: Glycerol-3-phosphate acyltransferase (213 aa).

6 helical membrane passes run 3-23 (ILLLILIAYLLGSIQTGLWIG), 54-76 (TITFLVDMLKGTLAVLLPIWLGI), 83-100 (IIGFFAIIGHVFPFFTGF), 110-130 (AGVLLGFVPLYFVFLLLVFAL), 142-162 (SITAAVVGLITLATFPAIHFL), and 163-183 (LDGYDPIFSAVLIIIVLVIIF).

The protein belongs to the PlsY family. Probably interacts with PlsX.

It localises to the cell membrane. The catalysed reaction is an acyl phosphate + sn-glycerol 3-phosphate = a 1-acyl-sn-glycero-3-phosphate + phosphate. Its pathway is lipid metabolism; phospholipid metabolism. In terms of biological role, catalyzes the transfer of an acyl group from acyl-phosphate (acyl-PO(4)) to glycerol-3-phosphate (G3P) to form lysophosphatidic acid (LPA). This enzyme utilizes acyl-phosphate as fatty acyl donor, but not acyl-CoA or acyl-ACP. This Streptococcus thermophilus (strain ATCC BAA-491 / LMD-9) protein is Glycerol-3-phosphate acyltransferase.